Consider the following 200-residue polypeptide: MNEALRDLAGYIKEKLDGRVQDWMVAYDELTIFVEPGDIVDVLTFLKSDVQCQFFAFVDISGVDYPARERRFEVVYHLLSPRQNQRIRVKVSTDEETPIPSVIEVFPAANWYEREIYDLYGVLFTEHPDLRRILTDYGFEGHPLRKDFPLTGFVEVHYDDEAKRVVYQPVNLRQEFRNFDFLSPWEGTDYVLPGDEKAKQ.

Belongs to the complex I 30 kDa subunit family. In terms of assembly, NDH-1 is composed of 14 different subunits. Subunits NuoB, C, D, E, F, and G constitute the peripheral sector of the complex.

The protein resides in the cell inner membrane. It carries out the reaction a quinone + NADH + 5 H(+)(in) = a quinol + NAD(+) + 4 H(+)(out). NDH-1 shuttles electrons from NADH, via FMN and iron-sulfur (Fe-S) centers, to quinones in the respiratory chain. The immediate electron acceptor for the enzyme in this species is believed to be ubiquinone. Couples the redox reaction to proton translocation (for every two electrons transferred, four hydrogen ions are translocated across the cytoplasmic membrane), and thus conserves the redox energy in a proton gradient. The chain is NADH-quinone oxidoreductase subunit C from Chelativorans sp. (strain BNC1).